The chain runs to 901 residues: Core protein VP3 (901 aa).

This sequence belongs to the orbivirus VP3 family.

It is found in the virion. Functionally, the VP3 protein is one of the five proteins (with VP1, VP4, VP6 and VP7) which form the inner capsid of the virus. The polypeptide is Core protein VP3 (Segment-3) (Bluetongue virus 10 (isolate USA) (BTV 10)).